The chain runs to 278 residues: Large ribosomal subunit protein uL2 (278 aa).

A disordered region spans residues 222 to 264 (GVAMNPIDHPHGGGEGRTSGGRHPVTPWGKPTKGRKTRKNKAT).

This sequence belongs to the universal ribosomal protein uL2 family. As to quaternary structure, part of the 50S ribosomal subunit. Forms a bridge to the 30S subunit in the 70S ribosome.

One of the primary rRNA binding proteins. Required for association of the 30S and 50S subunits to form the 70S ribosome, for tRNA binding and peptide bond formation. It has been suggested to have peptidyltransferase activity; this is somewhat controversial. Makes several contacts with the 16S rRNA in the 70S ribosome. The sequence is that of Large ribosomal subunit protein uL2 from Phenylobacterium zucineum (strain HLK1).